The primary structure comprises 356 residues: Neutral protease 2 homolog UREG_03761 (356 aa).

The signal sequence occupies residues 1 to 19 (MRFSSSFLSVLALASQALA). The propeptide occupies 20–181 (FPLNDLPTTD…ALPEATLDKR (162 aa)). Disulfide bonds link C189/C259 and C266/C284. H308 is a Zn(2+) binding site. E309 is an active-site residue. Residues H312 and D323 each coordinate Zn(2+).

This sequence belongs to the peptidase M35 family. The cofactor is Zn(2+).

It localises to the secreted. The catalysed reaction is Preferential cleavage of bonds with hydrophobic residues in P1'. Also 3-Asn-|-Gln-4 and 8-Gly-|-Ser-9 bonds in insulin B chain.. Functionally, secreted metalloproteinase that allows assimilation of proteinaceous substrates. Shows high activities on basic nuclear substrates such as histone and protamine. This Uncinocarpus reesii (strain UAMH 1704) protein is Neutral protease 2 homolog UREG_03761.